The following is a 406-amino-acid chain: S-adenosylmethionine synthase (406 aa).

ATP is bound at residue His17. Asp19 serves as a coordination point for Mg(2+). Residue Glu45 coordinates K(+). L-methionine contacts are provided by Glu58 and Gln101. The segment at 101 to 111 (QSAEINQGVAR) is flexible loop. ATP is bound by residues 178–180 (DGK), Asp258, 264–265 (RK), Ala281, and Lys285. Asp258 serves as a coordination point for L-methionine. Lys289 lines the L-methionine pocket.

The protein belongs to the AdoMet synthase family. Homotetramer; dimer of dimers. It depends on Mg(2+) as a cofactor. K(+) is required as a cofactor.

Its subcellular location is the cytoplasm. It catalyses the reaction L-methionine + ATP + H2O = S-adenosyl-L-methionine + phosphate + diphosphate. The protein operates within amino-acid biosynthesis; S-adenosyl-L-methionine biosynthesis; S-adenosyl-L-methionine from L-methionine: step 1/1. Functionally, catalyzes the formation of S-adenosylmethionine (AdoMet) from methionine and ATP. The overall synthetic reaction is composed of two sequential steps, AdoMet formation and the subsequent tripolyphosphate hydrolysis which occurs prior to release of AdoMet from the enzyme. This Bifidobacterium longum (strain NCC 2705) protein is S-adenosylmethionine synthase.